The following is a 301-amino-acid chain: Leucine-rich repeat-containing protein 30 (301 aa).

9 LRR repeats span residues Glu-72–Leu-93, Arg-95–Leu-116, Cys-118–Cys-139, Lys-141–Ser-163, Arg-164–Leu-185, Glu-187–Leu-208, Ser-210–Val-231, Ser-233–Leu-254, and Met-265–Gly-287.

This chain is Leucine-rich repeat-containing protein 30 (LRRC30), found in Homo sapiens (Human).